We begin with the raw amino-acid sequence, 236 residues long: Large ribosomal subunit protein uL3 (236 aa).

Residues 139-163 (ARDSSTTHEHHRHVGAIGQRKTPGK) form a disordered region.

The protein belongs to the universal ribosomal protein uL3 family. In terms of assembly, part of the 50S ribosomal subunit. Forms a cluster with proteins L14 and L19.

Functionally, one of the primary rRNA binding proteins, it binds directly near the 3'-end of the 23S rRNA, where it nucleates assembly of the 50S subunit. This chain is Large ribosomal subunit protein uL3, found in Anaeromyxobacter sp. (strain Fw109-5).